The following is a 140-amino-acid chain: Ergosterol biosynthetic protein 28 homolog (140 aa).

A run of 4 helical transmembrane segments spans residues 4–24, 52–72, 79–99, and 105–125; these read FLNV…GNTL, TFGI…IDIH, ITLW…FVYG, and IGVL…LVGL.

The protein belongs to the ERG28 family. In terms of tissue distribution, ubiquitous; strongly expressed in testis and some cancer cell lines.

The protein localises to the endoplasmic reticulum membrane. The chain is Ergosterol biosynthetic protein 28 homolog from Homo sapiens (Human).